The following is a 409-amino-acid chain: Histidine--tRNA ligase (409 aa).

It belongs to the class-II aminoacyl-tRNA synthetase family.

It localises to the cytoplasm. The enzyme catalyses tRNA(His) + L-histidine + ATP = L-histidyl-tRNA(His) + AMP + diphosphate + H(+). This Methanosphaerula palustris (strain ATCC BAA-1556 / DSM 19958 / E1-9c) protein is Histidine--tRNA ligase.